The sequence spans 73 residues: U-scoloptoxin(15)-Sa1a (73 aa).

A signal peptide spans 1 to 20 (MKFHIIFCLLAALMMTSAFA).

This sequence belongs to the scoloptoxin-15 family. In terms of processing, contains 2 disulfide bonds. As to expression, expressed by the venom gland.

Its subcellular location is the secreted. This chain is U-scoloptoxin(15)-Sa1a, found in Scolopendra alternans (Florida Keys giant centipede).